Reading from the N-terminus, the 223-residue chain is Putative thymidylate synthase (223 aa).

The active site involves cysteine 146.

It belongs to the thymidylate synthase family. Archaeal-type ThyA subfamily. Monomer.

Its subcellular location is the cytoplasm. Its pathway is pyrimidine metabolism; dTTP biosynthesis. May catalyze the biosynthesis of dTMP using an unknown cosubstrate. In vitro, also catalyzes the dehalogenation of 5-bromo-deoxyuridine monophosphate (Br-dUMP) and the tritium exchange of [5-3H]deoxyuridine monophosphate ([5-3H]dUMP). In Methanothermobacter marburgensis (strain ATCC BAA-927 / DSM 2133 / JCM 14651 / NBRC 100331 / OCM 82 / Marburg) (Methanobacterium thermoautotrophicum), this protein is Putative thymidylate synthase (thyA).